The following is a 658-amino-acid chain: Glycogen debranching enzyme (658 aa).

Residue aspartate 336 is the Nucleophile of the active site. The active-site Proton donor is the glutamate 371. The tract at residues 459-484 (EANGEENRDGTNSNYSDNHGKEGLGG) is disordered.

Belongs to the glycosyl hydrolase 13 family.

It carries out the reaction Hydrolysis of (1-&gt;6)-alpha-D-glucosidic linkages to branches with degrees of polymerization of three or four glucose residues in limit dextrin.. It functions in the pathway glycan degradation; glycogen degradation. Its function is as follows. Removes maltotriose and maltotetraose chains that are attached by 1,6-alpha-linkage to the limit dextrin main chain, generating a debranched limit dextrin. The chain is Glycogen debranching enzyme from Salmonella paratyphi A (strain ATCC 9150 / SARB42).